We begin with the raw amino-acid sequence, 131 residues long: MGRVRTKTTKRASRVVIEKYYPRLTLDFQTNKRIVDEVAIIASKRLRNKIAGYTTHLMKRIQRGPVRGISFKLQEEERERKDQYVPEVSELEVDRVNVDQDTKDMLKSLGYDQIPVRVLAPAPQERFRRRQ.

Belongs to the eukaryotic ribosomal protein eS17 family. Component of the small ribosomal subunit (SSU). Mature yeast ribosomes consist of a small (40S) and a large (60S) subunit. The 40S small subunit contains 1 molecule of ribosomal RNA (18S rRNA) and at least 33 different proteins. The large 60S subunit contains 3 rRNA molecules (25S, 5.8S and 5S rRNA) and at least 46 different proteins.

It localises to the cytoplasm. Its function is as follows. Component of the ribosome, a large ribonucleoprotein complex responsible for the synthesis of proteins in the cell. The small ribosomal subunit (SSU) binds messenger RNAs (mRNAs) and translates the encoded message by selecting cognate aminoacyl-transfer RNA (tRNA) molecules. The large subunit (LSU) contains the ribosomal catalytic site termed the peptidyl transferase center (PTC), which catalyzes the formation of peptide bonds, thereby polymerizing the amino acids delivered by tRNAs into a polypeptide chain. The nascent polypeptides leave the ribosome through a tunnel in the LSU and interact with protein factors that function in enzymatic processing, targeting, and the membrane insertion of nascent chains at the exit of the ribosomal tunnel. This Schizosaccharomyces pombe (strain 972 / ATCC 24843) (Fission yeast) protein is Small ribosomal subunit protein eS17A (rps1701).